Reading from the N-terminus, the 101-residue chain is Small ribosomal subunit protein uS14A (101 aa).

Disordered stretches follow at residues 1–20 (MAKK…VARY) and 28–72 (TEII…RPRG). Basic and acidic residues-rich tracts occupy residues 38-53 (EAER…RQPR) and 61-70 (RNRDSVDGRP).

The protein belongs to the universal ribosomal protein uS14 family. In terms of assembly, part of the 30S ribosomal subunit. Contacts proteins S3 and S10.

In terms of biological role, binds 16S rRNA, required for the assembly of 30S particles and may also be responsible for determining the conformation of the 16S rRNA at the A site. The protein is Small ribosomal subunit protein uS14A of Streptomyces avermitilis (strain ATCC 31267 / DSM 46492 / JCM 5070 / NBRC 14893 / NCIMB 12804 / NRRL 8165 / MA-4680).